We begin with the raw amino-acid sequence, 182 residues long: MLVLVLGDLHIPHRCNSLPAKFKKLLVPGKIQHILCTGNLCTKESYDYLKTLAGDVHIVRGDFDENLNYPEQKVVTVGQFKIGLIHGHQVIPWGDMASLALLQRQFDVDILISGHTHKFEAFEHENKFYINPGSATGAYNALETNIIPSFVLMDIQASTVVTYVYQLIGDDVKVERIEYKKP.

Zn(2+)-binding residues include aspartate 8, histidine 10, and asparagine 39. Lysine 50 bears the N6-acetyllysine mark. Positions 62, 86, 115, and 117 each coordinate Zn(2+).

It belongs to the VPS29 family. In terms of assembly, component of the commander complex consisting of the CCC subcomplex and the retriever subcomplex. Component of the heterotrimeric retriever complex formed by VPS26C, VPS29 and VPS35L; within the complex interacts with VPS35L. Component of the heterotrimeric retromer cargo-selective complex (CSC), also described as vacuolar protein sorting subcomplex (VPS), formed by VPS26 (VPS26A or VPS26B), VPS29 and VPS35. The CSC has a highly elongated structure with VPS26 and VPS29 binding independently at opposite distal ends of VPS35 as central platform. The CSC is believed to associate with variable sorting nexins to form functionally distinct retromer complex variants. The originally described retromer complex (also called SNX-BAR retromer) is a pentamer containing the CSC and a heterodimeric membrane-deforming subcomplex formed between SNX1 or SNX2 and SNX5 or SNX6 (also called SNX-BAR subcomplex); the respective CSC and SNX-BAR subcomplexes associate with low affinity. The CSC associates with SNX3 to form a SNX3-retromer complex. The CSC associates with SNX27, the WASH complex and the SNX-BAR subcomplex to form the SNX27-retromer complex. Interacts with VPS26A, VPS35, SNX1, SNX2, SNX3, SNX27, WASHC5. Interacts with TBC1D5; this interaction is blocked by VPS35L in the retriever complex. Interacts with SNX17; the interaction is indirect; SNX17 (via its C-terminus) interacts with the retriever complex (via VPS26C and VPS35L). Interacts with VPS26B and ANKRD27. As to quaternary structure, (Microbial infection) Interacts with human papillomavirus 16 minor capsid protein L2 (via C-terminus); this interaction mediates the transport of the capsid from the early endosome to the Golgi apparatus. In terms of tissue distribution, ubiquitous. Highly expressed in heart, lung, placenta, spleen, peripheral blood leukocytes, thymus, colon skeletal muscle, kidney and brain.

It is found in the cytoplasm. The protein localises to the membrane. The protein resides in the endosome membrane. It localises to the early endosome. Its subcellular location is the late endosome. Its function is as follows. Component of the commander complex that is essential for endosomal recycling of transmembrane cargos; the commander complex is composed of the CCC subcomplex and the retriever subcomplex. Component of the retriever complex, which is a heterotrimeric complex related to retromer cargo-selective complex (CSC) and essential for retromer-independent retrieval and recycling of numerous cargos such as integrin alpha-5/beta-1 (ITGA5:ITGB1). Component of the retromer cargo-selective complex (CSC). The CSC is believed to be the core functional component of retromer or respective retromer complex variants acting to prevent missorting of selected transmembrane cargo proteins into the lysosomal degradation pathway. The recruitment of the CSC to the endosomal membrane involves RAB7A and SNX3. The SNX-BAR retromer mediates retrograde transport of cargo proteins from endosomes to the trans-Golgi network (TGN) and is involved in endosome-to-plasma membrane transport for cargo protein recycling. The SNX3-retromer mediates the retrograde endosome-to-TGN transport of WLS distinct from the SNX-BAR retromer pathway. The SNX27-retromer is believed to be involved in endosome-to-plasma membrane trafficking and recycling of a broad spectrum of cargo proteins. The CSC seems to act as recruitment hub for other proteins, such as the WASH complex and TBC1D5. Required to regulate transcytosis of the polymeric immunoglobulin receptor (pIgR-pIgA). In the endosomes, retriever complex drives the retrieval and recycling of NxxY-motif-containing cargo proteins by coupling to SNX17, a cargo essential for the homeostatic maintenance of numerous cell surface proteins associated with processes that include cell migration, cell adhesion, nutrient supply and cell signaling. The recruitment of the retriever complex to the endosomal membrane involves CCC and WASH complexes. Involved in GLUT1 endosome-to-plasma membrane trafficking; the function is dependent of association with ANKRD27. (Microbial infection) The heterotrimeric retromer cargo-selective complex (CSC) mediates the exit of human papillomavirus from the early endosome and the delivery to the Golgi apparatus. The polypeptide is Vacuolar protein sorting-associated protein 29 (Homo sapiens (Human)).